The following is a 343-amino-acid chain: Ribosomal RNA small subunit methyltransferase C (343 aa).

The protein belongs to the methyltransferase superfamily. RsmC family. Monomer.

It localises to the cytoplasm. The catalysed reaction is guanosine(1207) in 16S rRNA + S-adenosyl-L-methionine = N(2)-methylguanosine(1207) in 16S rRNA + S-adenosyl-L-homocysteine + H(+). In terms of biological role, specifically methylates the guanine in position 1207 of 16S rRNA in the 30S particle. The polypeptide is Ribosomal RNA small subunit methyltransferase C (Shewanella sediminis (strain HAW-EB3)).